Here is a 291-residue protein sequence, read N- to C-terminus: Small ribosomal subunit protein uS2 (291 aa).

Acidic residues predominate over residues 238–247 (DEESGDELDE). Positions 238-291 (DEESGDELDESVSLHEEGREITDYENYTPPEEREYSVNDEGDVFDEDESLYEGR) are disordered. The segment covering 249–259 (VSLHEEGREIT) has biased composition (basic and acidic residues). A compositionally biased stretch (acidic residues) spans 274–291 (VNDEGDVFDEDESLYEGR).

This sequence belongs to the universal ribosomal protein uS2 family.

The protein is Small ribosomal subunit protein uS2 (rpsB) of Treponema pallidum (strain Nichols).